Reading from the N-terminus, the 125-residue chain is Large ribosomal subunit protein bL12 (125 aa).

This sequence belongs to the bacterial ribosomal protein bL12 family. As to quaternary structure, homodimer. Part of the ribosomal stalk of the 50S ribosomal subunit. Forms a multimeric L10(L12)X complex, where L10 forms an elongated spine to which 2 to 4 L12 dimers bind in a sequential fashion. Binds GTP-bound translation factors.

Forms part of the ribosomal stalk which helps the ribosome interact with GTP-bound translation factors. Is thus essential for accurate translation. This chain is Large ribosomal subunit protein bL12, found in Thioalkalivibrio sulfidiphilus (strain HL-EbGR7).